Consider the following 522-residue polypeptide: Glutamate--cysteine ligase (522 aa).

The protein belongs to the glutamate--cysteine ligase type 1 family. Type 1 subfamily.

The enzyme catalyses L-cysteine + L-glutamate + ATP = gamma-L-glutamyl-L-cysteine + ADP + phosphate + H(+). It functions in the pathway sulfur metabolism; glutathione biosynthesis; glutathione from L-cysteine and L-glutamate: step 1/2. In Vibrio parahaemolyticus serotype O3:K6 (strain RIMD 2210633), this protein is Glutamate--cysteine ligase.